The chain runs to 428 residues: Enolase (428 aa).

A (2R)-2-phosphoglycerate-binding site is contributed by Gln-163. Catalysis depends on Glu-205, which acts as the Proton donor. Residues Asp-242, Glu-285, and Asp-312 each coordinate Mg(2+). The (2R)-2-phosphoglycerate site is built by Lys-337, Arg-366, Ser-367, and Lys-388. Lys-337 functions as the Proton acceptor in the catalytic mechanism.

The protein belongs to the enolase family. It depends on Mg(2+) as a cofactor.

Its subcellular location is the cytoplasm. The protein localises to the secreted. It localises to the cell surface. The catalysed reaction is (2R)-2-phosphoglycerate = phosphoenolpyruvate + H2O. It participates in carbohydrate degradation; glycolysis; pyruvate from D-glyceraldehyde 3-phosphate: step 4/5. Functionally, catalyzes the reversible conversion of 2-phosphoglycerate (2-PG) into phosphoenolpyruvate (PEP). It is essential for the degradation of carbohydrates via glycolysis. In Neisseria meningitidis serogroup B (strain ATCC BAA-335 / MC58), this protein is Enolase.